A 269-amino-acid polypeptide reads, in one-letter code: Myelin protein zero-like protein 1 (269 aa).

An N-terminal signal peptide occupies residues 1-35 (MAAPAGAGALIASPDRRRCLWSVLAAALGLLTYGV). One can recognise an Ig-like V-type domain in the interval 36-146 (SALEVYTPKE…VKNPPDIVVQ (111 aa)). At 36–162 (SALEVYTPKE…YVVEKEILPA (127 aa)) the chain is on the extracellular side. Asn-50, Asn-64, and Asn-130 each carry an N-linked (GlcNAc...) asparagine glycan. Cys-58 and Cys-135 are disulfide-bonded. Residues 163–183 (FPVWVVVGIVTAVVLGLTLLI) form a helical membrane-spanning segment. Over 184-269 (TMILAVIYRR…SVVYADIRKN (86 aa)) the chain is Cytoplasmic. Residues 202–238 (GCNTSENVSPVKQVSRKSPSDTEGLVKSLPSGSHQGP) form a disordered region. Positions 203 to 213 (CNTSENVSPVK) are enriched in polar residues. A phosphoserine mark is found at Ser-206, Ser-210, Ser-219, and Ser-221. Residues 239-244 (VIYAQL) carry the ITIM motif 1 motif. Phosphotyrosine is present on Tyr-241. Position 260 is a phosphoserine (Ser-260). Positions 261–266 (VVYADI) match the ITIM motif 2 motif. Tyr-263 is modified (phosphotyrosine).

It belongs to the myelin P0 protein family. In terms of assembly, interacts with phosphorylated PTPN11/SHP-2. Post-translationally, phosphorylated on tyrosine residues upon stimulation with pervanadate and concanavalin-A (ConA). Phosphorylation at Tyr-241 and Tyr-263 is required for interaction with PTPN11/SHP-2. Dephosphorylated by PTPN11/SHP-2 (in vitro). N-glycosylated.

The protein resides in the membrane. Cell surface receptor, which is involved in signal transduction processes. Recruits PTPN11/SHP-2 to the cell membrane and is a putative substrate of PTPN11/SHP-2. Is a major receptor for concanavalin-A (ConA) and is involved in cellular signaling induced by ConA, which probably includes Src family tyrosine-protein kinases. May be involved in regulation of integrin-mediated cell motility. This chain is Myelin protein zero-like protein 1 (MPZL1), found in Bos taurus (Bovine).